We begin with the raw amino-acid sequence, 86 residues long: Conotoxin S6.10 (86 aa).

A signal peptide spans Met-1–Ala-22. A propeptide spanning residues Lys-23–Thr-45 is cleaved from the precursor. 3 disulfide bridges follow: Cys-48/Cys-62, Cys-55/Cys-66, and Cys-61/Cys-73.

Belongs to the conotoxin O1 superfamily. Expressed by the venom duct.

The protein resides in the secreted. This Conus striatus (Striated cone) protein is Conotoxin S6.10.